The following is a 146-amino-acid chain: Snaclec 1 (146 aa).

Positions 1–23 are cleaved as a signal peptide; it reads MGRFIFMSFGLLVVFLSLSGTGA. 3 cysteine pairs are disulfide-bonded: Cys25–Cys36, Cys53–Cys142, and Cys119–Cys134. In terms of domain architecture, C-type lectin spans 32 to 143; sequence YEGHCYRVFQ…CSRTYSFVCK (112 aa).

Belongs to the snaclec family. As to quaternary structure, heterodimer; disulfide-linked. In terms of tissue distribution, expressed by the venom gland.

The protein localises to the secreted. Functionally, interferes with one step of hemostasis (modulation of platelet aggregation, or coagulation cascade, for example). The chain is Snaclec 1 from Sistrurus catenatus edwardsii (Desert massasauga).